The following is a 264-amino-acid chain: Transcription initiation factor TFIID subunit 9 (264 aa).

Lys5 carries the post-translational modification N6-acetyllysine. Residues 120-137 (YCLTAPNYRLKSLQKKAS) mediate DNA binding. Residues Ser149, Ser152, Ser155, and Ser158 each carry the phosphoserine modification. The tract at residues 149-176 (SVGSVTSRPSTPTLGTPTPQTMSVSTKV) is disordered. Polar residues predominate over residues 151-176 (GSVTSRPSTPTLGTPTPQTMSVSTKV). Phosphothreonine is present on residues Thr159, Thr161, Thr164, and Thr178. Phosphoserine occurs at positions 181 and 196. A compositionally biased stretch (polar residues) spans 232 to 243 (SSQNTANESSNA). The segment at 232 to 264 (SSQNTANESSNALKRKREDDDDDDDDDDDYDNL) is disordered. Acidic residues predominate over residues 250–264 (DDDDDDDDDDDYDNL).

This sequence belongs to the TAF9 family. As to quaternary structure, component of the TFIID basal transcription factor complex, composed of TATA-box-binding protein TBP, and a number of TBP-associated factors (TAFs), including TAF1, TAF2, TAF3, TAF4, TAF5, TAF6, TAF7, TAF8, TAF9, TAF10, TAF11, TAF12 and TAF13. Component of the TATA-binding protein-free TAF complex (TFTC), the PCAF histone acetylase complex and the STAGA transcription coactivator-HAT complex. The PCAF complex consists at least of TADA2L/ADA2, SUPT3H/SPT3, TADA3L/ADA3, TAF5L/PAF65-beta, TAF6L/PAF65-alpha, TAF10/TAFII30, TAF12/TAFII20, TAF9/TAFII31 and TRRAP. The STAGA transcription coactivator-HAT complex consists at least of SUPT3H, GCN5L2, SUPT7L, TAF5L, TAF6L, TADA3L, TAD1L, TAF10, TAF12, TRRAP and TAF9. Binds N-terminal domain of p53/TP53 which is essential for transcription. Component of some MLL1/MLL complex, at least composed of the core components KMT2A/MLL1, ASH2L, HCFC1/HCF1, WDR5 and RBBP5, as well as the facultative components BACC1, CHD8, E2F6, HSP70, INO80C, KANSL1, LAS1L, MAX, MCRS1, MGA, MYST1/MOF, PELP1, PHF20, PRP31, RING2, RUVB1/TIP49A, RUVB2/TIP49B, SENP3, TAF1, TAF4, TAF6, TAF7, TAF9 and TEX10. Binds TFIIB and the Herpes simplex virus activator VP16. Forms a heterodimer with TAF6 in a complex with the TAF4B-TAF12 heterodimer. Also interacts with TAF5. Binds directly DNA. Increased DNA binding when complexed with TAF6.

It localises to the nucleus. Functionally, the TFIID basal transcription factor complex plays a major role in the initiation of RNA polymerase II (Pol II)-dependent transcription. TFIID recognizes and binds promoters with or without a TATA box via its subunit TBP, a TATA-box-binding protein, and promotes assembly of the pre-initiation complex (PIC). The TFIID complex consists of TBP and TBP-associated factors (TAFs), including TAF1, TAF2, TAF3, TAF4, TAF5, TAF6, TAF7, TAF8, TAF9, TAF10, TAF11, TAF12 and TAF13. TAF9 is also a component of the TBP-free TAFII complex (TFTC), the PCAF histone acetylase complex and the STAGA transcription coactivator-HAT complex. TAF9 and its paralog TAF9B are involved in transcriptional activation as well as repression of distinct but overlapping sets of genes. Essential for cell viability. May have a role in gene regulation associated with apoptosis. This Homo sapiens (Human) protein is Transcription initiation factor TFIID subunit 9 (TAF9).